The following is a 264-amino-acid chain: Thymidylate synthase (264 aa).

Arg-21 serves as a coordination point for dUMP. A (6R)-5,10-methylene-5,6,7,8-tetrahydrofolate-binding site is contributed by His-51. 126–127 is a dUMP binding site; that stretch reads RR. The active-site Nucleophile is the Cys-146. DUMP contacts are provided by residues 166 to 169, Asn-177, and 207 to 209; these read RSAD and HLY. Asp-169 contributes to the (6R)-5,10-methylene-5,6,7,8-tetrahydrofolate binding site. A (6R)-5,10-methylene-5,6,7,8-tetrahydrofolate-binding site is contributed by Ala-263.

Belongs to the thymidylate synthase family. Bacterial-type ThyA subfamily. In terms of assembly, homodimer.

Its subcellular location is the cytoplasm. It carries out the reaction dUMP + (6R)-5,10-methylene-5,6,7,8-tetrahydrofolate = 7,8-dihydrofolate + dTMP. The protein operates within pyrimidine metabolism; dTTP biosynthesis. Functionally, catalyzes the reductive methylation of 2'-deoxyuridine-5'-monophosphate (dUMP) to 2'-deoxythymidine-5'-monophosphate (dTMP) while utilizing 5,10-methylenetetrahydrofolate (mTHF) as the methyl donor and reductant in the reaction, yielding dihydrofolate (DHF) as a by-product. This enzymatic reaction provides an intracellular de novo source of dTMP, an essential precursor for DNA biosynthesis. This chain is Thymidylate synthase, found in Methylobacterium nodulans (strain LMG 21967 / CNCM I-2342 / ORS 2060).